We begin with the raw amino-acid sequence, 169 residues long: MSEQKQDVAATEEQQPVLQIQRIYVKDVSFEAPNLPHIFQQEWKPKLGFDLSTETTQVGDNLYEVVLNISVETTLEDSGDVAFICEVKQAGVFTISGLEDVQMAHCLTSQCPNMLFPYARELVSNLVNRGTFPALNLSPVNFDALFVEYMNRQQAENAEEKSEEEQTKH.

Belongs to the SecB family. Homotetramer, a dimer of dimers. One homotetramer interacts with 1 SecA dimer.

It localises to the cytoplasm. Its function is as follows. One of the proteins required for the normal export of preproteins out of the cell cytoplasm. It is a molecular chaperone that binds to a subset of precursor proteins, maintaining them in a translocation-competent state. It also specifically binds to its receptor SecA. This is Protein-export protein SecB from Haemophilus influenzae (strain PittEE).